The sequence spans 245 residues: Phycocyanobilin:ferredoxin oxidoreductase (245 aa).

It belongs to the HY2 family.

It catalyses the reaction (2R,3Z)-phycocyanobilin + 4 oxidized [2Fe-2S]-[ferredoxin] = biliverdin IXalpha + 4 reduced [2Fe-2S]-[ferredoxin] + 4 H(+). Functionally, catalyzes the four-electron reduction of biliverdin IX-alpha (2-electron reduction at both the A and D rings); the reaction proceeds via an isolatable 2-electron intermediate, 181,182-dihydrobiliverdin. This is Phycocyanobilin:ferredoxin oxidoreductase from Trichormus variabilis (strain ATCC 29413 / PCC 7937) (Anabaena variabilis).